Reading from the N-terminus, the 196-residue chain is Probable GTP-binding protein EngB (196 aa).

Positions 22–194 (DKKEIAFAGR…LKTIGEILGD (173 aa)) constitute an EngB-type G domain. Residues 30 to 37 (GRSNVGKS), 56 to 60 (GKTRS), 74 to 77 (DLPG), 141 to 144 (TKSD), and 173 to 175 (FSS) contribute to the GTP site. The Mg(2+) site is built by S37 and T58.

This sequence belongs to the TRAFAC class TrmE-Era-EngA-EngB-Septin-like GTPase superfamily. EngB GTPase family. Requires Mg(2+) as cofactor.

Functionally, necessary for normal cell division and for the maintenance of normal septation. This chain is Probable GTP-binding protein EngB, found in Petrotoga mobilis (strain DSM 10674 / SJ95).